Consider the following 179-residue polypeptide: Large ribosomal subunit protein uL6 (179 aa).

The protein belongs to the universal ribosomal protein uL6 family. As to quaternary structure, part of the 50S ribosomal subunit.

Its function is as follows. This protein binds to the 23S rRNA, and is important in its secondary structure. It is located near the subunit interface in the base of the L7/L12 stalk, and near the tRNA binding site of the peptidyltransferase center. In Synechocystis sp. (strain ATCC 27184 / PCC 6803 / Kazusa), this protein is Large ribosomal subunit protein uL6.